The following is a 154-amino-acid chain: 6,7-dimethyl-8-ribityllumazine synthase (154 aa).

5-amino-6-(D-ribitylamino)uracil contacts are provided by residues Phe-23, 57–59, and 81–83; these read AFE and AVI. Residue 86-87 participates in (2S)-2-hydroxy-3-oxobutyl phosphate binding; it reads ST. His-89 acts as the Proton donor in catalysis. Phe-114 is a 5-amino-6-(D-ribitylamino)uracil binding site. Arg-128 contacts (2S)-2-hydroxy-3-oxobutyl phosphate.

This sequence belongs to the DMRL synthase family.

The catalysed reaction is (2S)-2-hydroxy-3-oxobutyl phosphate + 5-amino-6-(D-ribitylamino)uracil = 6,7-dimethyl-8-(1-D-ribityl)lumazine + phosphate + 2 H2O + H(+). The protein operates within cofactor biosynthesis; riboflavin biosynthesis; riboflavin from 2-hydroxy-3-oxobutyl phosphate and 5-amino-6-(D-ribitylamino)uracil: step 1/2. In terms of biological role, catalyzes the formation of 6,7-dimethyl-8-ribityllumazine by condensation of 5-amino-6-(D-ribitylamino)uracil with 3,4-dihydroxy-2-butanone 4-phosphate. This is the penultimate step in the biosynthesis of riboflavin. The sequence is that of 6,7-dimethyl-8-ribityllumazine synthase from Campylobacter jejuni subsp. doylei (strain ATCC BAA-1458 / RM4099 / 269.97).